The sequence spans 119 residues: Large ribosomal subunit protein bL20 (119 aa).

It belongs to the bacterial ribosomal protein bL20 family.

Binds directly to 23S ribosomal RNA and is necessary for the in vitro assembly process of the 50S ribosomal subunit. It is not involved in the protein synthesizing functions of that subunit. The sequence is that of Large ribosomal subunit protein bL20 from Azoarcus sp. (strain BH72).